We begin with the raw amino-acid sequence, 262 residues long: Nurim (262 aa).

The Nuclear segment spans residues 1–4 (MAPA). A helical membrane pass occupies residues 5–28 (LLLVPAALASFILAFGTGVEFVRF). The Perinuclear space portion of the chain corresponds to 29-58 (TSLRPLLGGIPESGGPDARQGWLAALQDQS). A helical membrane pass occupies residues 59–80 (ILVPLAWDLGLLLLFVGQHSLM). The Nuclear segment spans residues 81 to 97 (ATETVKAWMSRYFGVLQ). A helical transmembrane segment spans residues 98-114 (RSLYVACTALALQLVMR). At 115 to 133 (YWEPVPRGPVLWEAQAEPW) the chain is on the perinuclear space side. The chain crosses the membrane as a helical span at residues 134 to 164 (ATWVPLLCFVLHVISWLLIFSILLVFDYAEL). Topologically, residues 165-191 (MGLKQVYYHVLGLGEPLALKSPRALRL) are nuclear. A helical membrane pass occupies residues 192-210 (FSHLRHPVCVELLTVLWVV). The Perinuclear space segment spans residues 211-216 (PTLGTD). The helical transmembrane segment at 217–234 (RLLLALLLTLYLGLAHGL) threads the bilayer. The Nuclear portion of the chain corresponds to 235 to 262 (DQQDLRYLRAQLQRKLHLLSRPQDGEAE).

This sequence belongs to the nurim family.

The protein resides in the nucleus inner membrane. This chain is Nurim (NRM), found in Sus scrofa (Pig).